A 250-amino-acid polypeptide reads, in one-letter code: 1-(5-phosphoribosyl)-5-[(5-phosphoribosylamino)methylideneamino] imidazole-4-carboxamide isomerase (250 aa).

Catalysis depends on Asp-8, which acts as the Proton acceptor. Catalysis depends on Asp-131, which acts as the Proton donor.

It belongs to the HisA/HisF family.

Its subcellular location is the cytoplasm. The enzyme catalyses 1-(5-phospho-beta-D-ribosyl)-5-[(5-phospho-beta-D-ribosylamino)methylideneamino]imidazole-4-carboxamide = 5-[(5-phospho-1-deoxy-D-ribulos-1-ylimino)methylamino]-1-(5-phospho-beta-D-ribosyl)imidazole-4-carboxamide. The protein operates within amino-acid biosynthesis; L-histidine biosynthesis; L-histidine from 5-phospho-alpha-D-ribose 1-diphosphate: step 4/9. The protein is 1-(5-phosphoribosyl)-5-[(5-phosphoribosylamino)methylideneamino] imidazole-4-carboxamide isomerase of Paraburkholderia phymatum (strain DSM 17167 / CIP 108236 / LMG 21445 / STM815) (Burkholderia phymatum).